The following is a 504-amino-acid chain: CaM kinase-like vesicle-associated protein (504 aa).

One can recognise a Protein kinase domain in the interval Y24–I286. A disordered region spans residues K378–S504. S384 is modified (phosphoserine). Residues T390–P431 are compositionally biased toward polar residues. Phosphothreonine is present on residues T438 and T462. The segment covering T445–P470 has biased composition (low complexity).

Belongs to the protein kinase superfamily. CAMK Ser/Thr protein kinase family. Interacts with calmodulin, in the presence of calcium. Ca(2+) is required as a cofactor. In terms of tissue distribution, expressed in brain and weakly in eye. Not detected in liver, kidney, spleen, thymus, bladder, aorta, lung, intestine, esophagus, stomach, skeletal muscle, heart, diaphragm, uterus, tail skin, submaxillary gland, prostate, ear, epididymis, placenta, pancreas, ovary, testis, adrenal gland, parathyroid gland, thyroid gland, pineal gland, pituitary and sciatic nerve. In adult hippocampus, predominantly expressed in caudate nucleus, cortex, hypothalamus, olfactory bulb, and midbrain and faintly in pons, brainstem and spinal cord.

Its subcellular location is the cell membrane. The protein localises to the cytoplasmic vesicle membrane. Its function is as follows. Has no detectable kinase activity in vitro. The chain is CaM kinase-like vesicle-associated protein (Camkv) from Rattus norvegicus (Rat).